A 540-amino-acid polypeptide reads, in one-letter code: Probable LRR receptor-like serine/threonine-protein kinase RPK1 (540 aa).

The first 19 residues, 1 to 19 (MKLLGLVFLLFNLFMFSFS), serve as a signal peptide directing secretion. At 20–198 (RKLLTESGGG…PGKSGLYPIE (179 aa)) the chain is on the extracellular side. LRR repeat units follow at residues 118–142 (LSEI…IWGL) and 144–169 (KLEI…VLRK). The chain crosses the membrane as a helical span at residues 199-219 (IASIVSASVIVFVLLVLVILF). Residues 220–540 (IYTRKWKRNS…LLKRIQPSRL (321 aa)) are Cytoplasmic-facing. Threonine 250 and threonine 258 each carry phosphothreonine. The Protein kinase domain occupies 261-535 (FSNSNCIGHG…KQAVRLLKRI (275 aa)). ATP-binding positions include 267–275 (IGHGGFGST) and lysine 289. Residues tyrosine 334 and tyrosine 372 each carry the phosphotyrosine modification. Residue aspartate 385 is the Proton acceptor of the active site. Tyrosine 427 carries the phosphotyrosine modification. Threonine 435 is subject to Phosphothreonine.

This sequence belongs to the protein kinase superfamily. Ser/Thr protein kinase family. As to expression, expressed in roots, stems, leaves, and flowers.

It is found in the cell membrane. The catalysed reaction is L-seryl-[protein] + ATP = O-phospho-L-seryl-[protein] + ADP + H(+). It carries out the reaction L-threonyl-[protein] + ATP = O-phospho-L-threonyl-[protein] + ADP + H(+). Functionally, involved in the main abscisic acid-mediated (ABA) signaling pathway and in early ABA perception. Together with RPK2, required for pattern formation along the radial axis (e.g. the apical embryonic domain cell types that generate cotyledon primordia), and the apical-basal axis (e.g. differentiation of the basal pole during early embryogenesis). The protein is Probable LRR receptor-like serine/threonine-protein kinase RPK1 (RPK1) of Arabidopsis thaliana (Mouse-ear cress).